A 194-amino-acid polypeptide reads, in one-letter code: Protein GrpE (194 aa).

The segment covering Met1 to Thr14 has biased composition (polar residues). A disordered region spans residues Met1–Leu50. A compositionally biased stretch (low complexity) spans Arg21–Ala38.

Belongs to the GrpE family. Homodimer.

Its subcellular location is the cytoplasm. In terms of biological role, participates actively in the response to hyperosmotic and heat shock by preventing the aggregation of stress-denatured proteins, in association with DnaK and GrpE. It is the nucleotide exchange factor for DnaK and may function as a thermosensor. Unfolded proteins bind initially to DnaJ; upon interaction with the DnaJ-bound protein, DnaK hydrolyzes its bound ATP, resulting in the formation of a stable complex. GrpE releases ADP from DnaK; ATP binding to DnaK triggers the release of the substrate protein, thus completing the reaction cycle. Several rounds of ATP-dependent interactions between DnaJ, DnaK and GrpE are required for fully efficient folding. This chain is Protein GrpE, found in Paraburkholderia phytofirmans (strain DSM 17436 / LMG 22146 / PsJN) (Burkholderia phytofirmans).